Consider the following 238-residue polypeptide: ATP-dependent dethiobiotin synthetase BioD (238 aa).

ATP is bound at residue glutamate 12–valine 17. A Mg(2+)-binding site is contributed by threonine 16. Lysine 37 is an active-site residue. Residue threonine 41 participates in substrate binding. ATP is bound by residues aspartate 50, glutamate 109 to glycine 112, glycine 170 to serine 171, and proline 200 to glycine 202. The Mg(2+) site is built by aspartate 50 and glutamate 109.

This sequence belongs to the dethiobiotin synthetase family. In terms of assembly, homodimer. The cofactor is Mg(2+).

Its subcellular location is the cytoplasm. The catalysed reaction is (7R,8S)-7,8-diammoniononanoate + CO2 + ATP = (4R,5S)-dethiobiotin + ADP + phosphate + 3 H(+). Its pathway is cofactor biosynthesis; biotin biosynthesis; biotin from 7,8-diaminononanoate: step 1/2. Functionally, catalyzes a mechanistically unusual reaction, the ATP-dependent insertion of CO2 between the N7 and N8 nitrogen atoms of 7,8-diaminopelargonic acid (DAPA, also called 7,8-diammoniononanoate) to form a ureido ring. This is ATP-dependent dethiobiotin synthetase BioD from Streptomyces avermitilis (strain ATCC 31267 / DSM 46492 / JCM 5070 / NBRC 14893 / NCIMB 12804 / NRRL 8165 / MA-4680).